Here is a 150-residue protein sequence, read N- to C-terminus: Keratin-associated protein 15-1 (150 aa).

This sequence belongs to the PMG family. In terms of assembly, interacts with hair keratins. Expressed at high levels in skin and at lower levels in the developing mammary gland.

Functionally, in the hair cortex, hair keratin intermediate filaments are embedded in an interfilamentous matrix, consisting of hair keratin-associated proteins (KRTAP), which are essential for the formation of a rigid and resistant hair shaft through their extensive disulfide bond cross-linking with abundant cysteine residues of hair keratins. The matrix proteins include the high-sulfur and high-glycine-tyrosine keratins. The chain is Keratin-associated protein 15-1 from Mus musculus (Mouse).